The sequence spans 214 residues: MNLIQLKKWFTILTFVLTAFLVTRTAIAETSPYVLMQQAADKLFSDIQANQSKIKQDPNYLRTIVRNDLLPYVNLEYAGSKVLGSYYKSTSAEQREKFFKTFGELIEQKYAQALTNYSNQKIQIESEKELGDNNFINIRVNIIQANGVAPILLYFKWRKGNKSGEWKVYDMVGAGVSMLEDTIKNWVGILNKQGIDTLITKMQQSASQPIIFNQ.

A signal peptide spans 1 to 28 (MNLIQLKKWFTILTFVLTAFLVTRTAIA).

The protein belongs to the MlaC/ttg2D family.

The protein resides in the periplasm. Functionally, involved in a phospholipid transport pathway that maintains lipid asymmetry in the outer membrane by retrograde trafficking of phospholipids from the outer membrane to the inner membrane. May transfer phospholipid across the periplasmic space and deliver it to the MlaFEDB complex at the inner membrane. In Haemophilus influenzae (strain ATCC 51907 / DSM 11121 / KW20 / Rd), this protein is Intermembrane phospholipid transport system binding protein MlaC.